A 259-amino-acid chain; its full sequence is Proteasome subunit alpha (259 aa).

This sequence belongs to the peptidase T1A family. The 20S proteasome core is composed of 14 alpha and 14 beta subunits that assemble into four stacked heptameric rings, resulting in a barrel-shaped structure. The two inner rings, each composed of seven catalytic beta subunits, are sandwiched by two outer rings, each composed of seven alpha subunits. The catalytic chamber with the active sites is on the inside of the barrel. Has a gated structure, the ends of the cylinder being occluded by the N-termini of the alpha-subunits. Is capped at one or both ends by the proteasome regulatory ATPase, PAN.

It is found in the cytoplasm. Its activity is regulated as follows. The formation of the proteasomal ATPase PAN-20S proteasome complex, via the docking of the C-termini of PAN into the intersubunit pockets in the alpha-rings, triggers opening of the gate for substrate entry. Interconversion between the open-gate and close-gate conformations leads to a dynamic regulation of the 20S proteasome proteolysis activity. In terms of biological role, component of the proteasome core, a large protease complex with broad specificity involved in protein degradation. The polypeptide is Proteasome subunit alpha (Methanococcus maripaludis (strain C6 / ATCC BAA-1332)).